A 114-amino-acid polypeptide reads, in one-letter code: uncharacterized protein (114 aa).

The interval 1–37 is disordered; the sequence is MLKKILSLFKKEEPKTEEKPTEVEEKKEEREEKEEKK. The span at 9 to 37 shows a compositional bias: basic and acidic residues; sequence FKKEEPKTEEKPTEVEEKKEEREEKEEKK.

This is an uncharacterized protein from Aquifex aeolicus (strain VF5).